The sequence spans 339 residues: Ketol-acid reductoisomerase (NADP(+)) (339 aa).

Residues 1–182 form the KARI N-terminal Rossmann domain; sequence MRVYYDRDAD…GGGRAGIIET (182 aa). NADP(+) contacts are provided by residues 24 to 27, Arg-48, Ser-51, Ser-53, and 83 to 86; these read YGSQ and DELQ. His-108 is an active-site residue. Gly-134 contributes to the NADP(+) binding site. In terms of domain architecture, KARI C-terminal knotted spans 183–328; that stretch reads TFREECETDL…ARLRDMMPWI (146 aa). The Mg(2+) site is built by Asp-191, Glu-195, Glu-227, and Glu-231. Ser-252 provides a ligand contact to substrate.

Belongs to the ketol-acid reductoisomerase family. It depends on Mg(2+) as a cofactor.

It catalyses the reaction (2R)-2,3-dihydroxy-3-methylbutanoate + NADP(+) = (2S)-2-acetolactate + NADPH + H(+). The enzyme catalyses (2R,3R)-2,3-dihydroxy-3-methylpentanoate + NADP(+) = (S)-2-ethyl-2-hydroxy-3-oxobutanoate + NADPH + H(+). Its pathway is amino-acid biosynthesis; L-isoleucine biosynthesis; L-isoleucine from 2-oxobutanoate: step 2/4. It functions in the pathway amino-acid biosynthesis; L-valine biosynthesis; L-valine from pyruvate: step 2/4. In terms of biological role, involved in the biosynthesis of branched-chain amino acids (BCAA). Catalyzes an alkyl-migration followed by a ketol-acid reduction of (S)-2-acetolactate (S2AL) to yield (R)-2,3-dihydroxy-isovalerate. In the isomerase reaction, S2AL is rearranged via a Mg-dependent methyl migration to produce 3-hydroxy-3-methyl-2-ketobutyrate (HMKB). In the reductase reaction, this 2-ketoacid undergoes a metal-dependent reduction by NADPH to yield (R)-2,3-dihydroxy-isovalerate. This is Ketol-acid reductoisomerase (NADP(+)) from Nitrobacter winogradskyi (strain ATCC 25391 / DSM 10237 / CIP 104748 / NCIMB 11846 / Nb-255).